A 204-amino-acid chain; its full sequence is E2 ubiquitin-conjugating enzyme PEX4 (204 aa).

Residues Ser2 to Ile196 form the UBC core domain. The active-site Glycyl thioester intermediate is the Cys133.

Belongs to the ubiquitin-conjugating enzyme family.

It is found in the peroxisome membrane. It catalyses the reaction S-ubiquitinyl-[E1 ubiquitin-activating enzyme]-L-cysteine + [E2 ubiquitin-conjugating enzyme]-L-cysteine = [E1 ubiquitin-activating enzyme]-L-cysteine + S-ubiquitinyl-[E2 ubiquitin-conjugating enzyme]-L-cysteine.. It participates in protein modification; protein ubiquitination. Functionally, E2 ubiquitin-conjugating enzyme involved in peroxisome biosynthesis. Acts late in peroxisomal matrix protein import, after matrix protein translocation. Required for both monoubiquitination and polyubiquitination of coreceptor PEX20. polyubiquitination of PEX20 at conserved lysine 'Lys-19' near the N-terminus leads to its and proteasomal degradation, whereas a monoubiquitination at the conserved cysteine 'Cys-8' is essential for its recycling. The protein is E2 ubiquitin-conjugating enzyme PEX4 of Komagataella phaffii (strain GS115 / ATCC 20864) (Yeast).